A 178-amino-acid polypeptide reads, in one-letter code: Large ribosomal subunit protein eL20x (178 aa).

Belongs to the eukaryotic ribosomal protein eL20 family.

The chain is Large ribosomal subunit protein eL20x (RPL18AC) from Arabidopsis thaliana (Mouse-ear cress).